The sequence spans 207 residues: Outer-membrane lipoprotein LolB (207 aa).

Residues 1-21 form the signal peptide; the sequence is MPLPDFRLIRLLPLAALVLTA. Residue Cys-22 is the site of N-palmitoyl cysteine attachment. Cys-22 carries S-diacylglycerol cysteine lipidation.

The protein belongs to the LolB family. As to quaternary structure, monomer.

It is found in the cell outer membrane. Its function is as follows. Plays a critical role in the incorporation of lipoproteins in the outer membrane after they are released by the LolA protein. This chain is Outer-membrane lipoprotein LolB, found in Escherichia coli (strain SMS-3-5 / SECEC).